The primary structure comprises 211 residues: Ceramide-1-phosphate transfer protein (211 aa).

An N-acylsphingoid base 1-phosphate contacts are provided by Asp53, Lys57, Arg103, Arg107, and His147.

It belongs to the GLTP family.

The protein localises to the cytoplasm. It localises to the cytosol. Its subcellular location is the golgi apparatus. It is found in the trans-Golgi network membrane. The protein resides in the cell membrane. The protein localises to the endosome membrane. It localises to the nucleus outer membrane. It carries out the reaction N-(hexadecanoyl)-sphing-4-enine-1-phosphate(in) = N-(hexadecanoyl)-sphing-4-enine-1-phosphate(out). It catalyses the reaction N-(9Z-octadecenoyl)-sphing-4-enine-1-phosphate(in) = N-(9Z-octadecenoyl)-sphing-4-enine-1-phosphate(out). In terms of biological role, mediates the intracellular transfer of ceramide-1-phosphate (C1P) between organelle membranes and the cell membrane. Required for normal structure of the Golgi stacks. Can bind phosphoceramides with a variety of aliphatic chains, but has a preference for lipids with saturated C16:0 or monounsaturated C18:1 aliphatic chains, and is inefficient with phosphoceramides containing lignoceryl (C24:0). Plays a role in the regulation of the cellular levels of ceramide-1-phosphate, and thereby contributes to the regulation of phospholipase PLA2G4A activity and the release of arachidonic acid. Has no activity with galactosylceramide, lactosylceramide, sphingomyelin, phosphatidylcholine, phosphatidic acid and ceramide. C1P transfer is stimulated by phosphatidylserine in C1P source vesicles. Regulates autophagy and pyroptosis, but not apoptosis. In Danio rerio (Zebrafish), this protein is Ceramide-1-phosphate transfer protein (cptp).